The sequence spans 156 residues: Type IV major fimbrial protein FimA (156 aa).

Residues 1–7 constitute a propeptide, leader sequence; it reads MKSLQKG. Phe8 is subject to N-methylphenylalanine. A helical transmembrane segment spans residues 8–28; the sequence is FTLIELMIVVAIIGILAAIAI. Cystine bridges form between Cys57/Cys67 and Cys141/Cys154.

The protein belongs to the N-Me-Phe pilin family. As to quaternary structure, the pili are polar flexible filaments of about 5.4 nanometers diameter and 2.5 micrometers average length; they consist of only a single polypeptide chain arranged in a helical configuration of five subunits per turn in the assembled pilus.

It localises to the fimbrium. Its subcellular location is the membrane. Functionally, major component of the type IV fimbriae that plays an essential role in twitching motility, natural transformation, and protease secretion. This chain is Type IV major fimbrial protein FimA (fimA), found in Dichelobacter nodosus (Bacteroides nodosus).